A 103-amino-acid chain; its full sequence is MTVLERLAATVEARKGADPDSSWTAKLLAKGPEKCAEKFGEEAVEAIIEAVRGDRARLASEAADVLYHLLVMLAARDVTLAEVMAVLEAREGTSGIAEKAGRG.

It belongs to the PRA-PH family.

Its subcellular location is the cytoplasm. It carries out the reaction 1-(5-phospho-beta-D-ribosyl)-ATP + H2O = 1-(5-phospho-beta-D-ribosyl)-5'-AMP + diphosphate + H(+). Its pathway is amino-acid biosynthesis; L-histidine biosynthesis; L-histidine from 5-phospho-alpha-D-ribose 1-diphosphate: step 2/9. This is Phosphoribosyl-ATP pyrophosphatase from Cereibacter sphaeroides (strain ATCC 17029 / ATH 2.4.9) (Rhodobacter sphaeroides).